Reading from the N-terminus, the 449-residue chain is Maltoporin (449 aa).

The first 24 residues, 1–24 (MITLRKLPLAVAVAAGVMSAQAMA), serve as a signal peptide directing secretion.

Belongs to the porin LamB (TC 1.B.3) family. Homotrimer formed of three 18-stranded antiparallel beta-barrels, containing three independent channels.

The protein localises to the cell outer membrane. It catalyses the reaction beta-maltose(in) = beta-maltose(out). In terms of biological role, involved in the transport of maltose and maltodextrins. In Citrobacter koseri (strain ATCC BAA-895 / CDC 4225-83 / SGSC4696), this protein is Maltoporin.